The following is a 290-amino-acid chain: Bifunctional protein FolD (290 aa).

NADP(+)-binding positions include 165–167 (GRG), Ser194, and Ile235.

The protein belongs to the tetrahydrofolate dehydrogenase/cyclohydrolase family. In terms of assembly, homodimer.

The catalysed reaction is (6R)-5,10-methylene-5,6,7,8-tetrahydrofolate + NADP(+) = (6R)-5,10-methenyltetrahydrofolate + NADPH. The enzyme catalyses (6R)-5,10-methenyltetrahydrofolate + H2O = (6R)-10-formyltetrahydrofolate + H(+). Its pathway is one-carbon metabolism; tetrahydrofolate interconversion. Its function is as follows. Catalyzes the oxidation of 5,10-methylenetetrahydrofolate to 5,10-methenyltetrahydrofolate and then the hydrolysis of 5,10-methenyltetrahydrofolate to 10-formyltetrahydrofolate. This Syntrophotalea carbinolica (strain DSM 2380 / NBRC 103641 / GraBd1) (Pelobacter carbinolicus) protein is Bifunctional protein FolD.